The primary structure comprises 332 residues: Putative D-threonate 4-phosphate dehydrogenase (332 aa).

2 residues coordinate substrate: His138 and Thr139. The a divalent metal cation site is built by His168, His211, and His266. The substrate site is built by Lys274 and Arg292.

It belongs to the PdxA family. PdxA2 subfamily. Homodimer. The cofactor is a divalent metal cation.

The enzyme catalyses 4-O-phospho-D-threonate + NAD(+) = dihydroxyacetone phosphate + CO2 + NADH. In terms of biological role, catalyzes the NAD-dependent oxidation and subsequent decarboxylation of D-threonate 4-phosphate to produce dihydroxyacetone phosphate (DHAP). In Fusobacterium nucleatum subsp. nucleatum (strain ATCC 25586 / DSM 15643 / BCRC 10681 / CIP 101130 / JCM 8532 / KCTC 2640 / LMG 13131 / VPI 4355), this protein is Putative D-threonate 4-phosphate dehydrogenase.